Here is a 76-residue protein sequence, read N- to C-terminus: MSDIAERVKKIVAEQLGVKDEISNEASFVDDLGADSLDTVELVMALEEEFECEIPDEDAEKITTVQQAIDYIQSHT.

A Carrier domain is found at 2–76 (SDIAERVKKI…QAIDYIQSHT (75 aa)). An O-(pantetheine 4'-phosphoryl)serine modification is found at Ser36.

The protein belongs to the acyl carrier protein (ACP) family. In terms of processing, 4'-phosphopantetheine is transferred from CoA to a specific serine of apo-ACP by AcpS. This modification is essential for activity because fatty acids are bound in thioester linkage to the sulfhydryl of the prosthetic group.

Its subcellular location is the cytoplasm. It functions in the pathway lipid metabolism; fatty acid biosynthesis. Carrier of the growing fatty acid chain in fatty acid biosynthesis. This is Acyl carrier protein from Methylococcus capsulatus (strain ATCC 33009 / NCIMB 11132 / Bath).